Reading from the N-terminus, the 248-residue chain is 3-deoxy-manno-octulosonate cytidylyltransferase (248 aa).

This sequence belongs to the KdsB family.

The protein localises to the cytoplasm. It carries out the reaction 3-deoxy-alpha-D-manno-oct-2-ulosonate + CTP = CMP-3-deoxy-beta-D-manno-octulosonate + diphosphate. Its pathway is nucleotide-sugar biosynthesis; CMP-3-deoxy-D-manno-octulosonate biosynthesis; CMP-3-deoxy-D-manno-octulosonate from 3-deoxy-D-manno-octulosonate and CTP: step 1/1. It participates in bacterial outer membrane biogenesis; lipopolysaccharide biosynthesis. Activates KDO (a required 8-carbon sugar) for incorporation into bacterial lipopolysaccharide in Gram-negative bacteria. The sequence is that of 3-deoxy-manno-octulosonate cytidylyltransferase from Salmonella typhi.